Consider the following 367-residue polypeptide: 4-hydroxy-3-methylbut-2-en-1-yl diphosphate synthase (flavodoxin) (367 aa).

4 residues coordinate [4Fe-4S] cluster: cysteine 265, cysteine 268, cysteine 300, and glutamate 307.

Belongs to the IspG family. The cofactor is [4Fe-4S] cluster.

The catalysed reaction is (2E)-4-hydroxy-3-methylbut-2-enyl diphosphate + oxidized [flavodoxin] + H2O + 2 H(+) = 2-C-methyl-D-erythritol 2,4-cyclic diphosphate + reduced [flavodoxin]. The protein operates within isoprenoid biosynthesis; isopentenyl diphosphate biosynthesis via DXP pathway; isopentenyl diphosphate from 1-deoxy-D-xylulose 5-phosphate: step 5/6. In terms of biological role, converts 2C-methyl-D-erythritol 2,4-cyclodiphosphate (ME-2,4cPP) into 1-hydroxy-2-methyl-2-(E)-butenyl 4-diphosphate. The polypeptide is 4-hydroxy-3-methylbut-2-en-1-yl diphosphate synthase (flavodoxin) (Bacillus anthracis).